Here is a 325-residue protein sequence, read N- to C-terminus: SPbeta prophage-derived uncharacterized protein YopR (325 aa).

The polypeptide is SPbeta prophage-derived uncharacterized protein YopR (yopR) (Bacillus subtilis (strain 168)).